The sequence spans 331 residues: Meiotic recombination protein P22 (331 aa).

Residues N132–K187 form a disordered region. The span at P152–Q167 shows a compositional bias: basic residues. Positions S168–P181 are enriched in polar residues.

This sequence belongs to the TOP6B-like family.

Its subcellular location is the chromosome. In terms of biological role, required for formation of the mei-W68-mediated double-strand breaks (DSBs) that initiate meiotic recombination. The polypeptide is Meiotic recombination protein P22 (Drosophila melanogaster (Fruit fly)).